We begin with the raw amino-acid sequence, 47 residues long: Delta-actitoxin-Cgg1b (47 aa).

Residue Pro3 is modified to Hydroxyproline. 3 cysteine pairs are disulfide-bonded: Cys4/Cys44, Cys6/Cys34, and Cys27/Cys45.

It belongs to the sea anemone sodium channel inhibitory toxin family. Type I subfamily.

It is found in the secreted. The protein resides in the nematocyst. In terms of biological role, binds voltage-dependently at site 3 of sodium channels (Nav) and inhibits the inactivation, thereby blocking neuronal transmission. This is Delta-actitoxin-Cgg1b from Condylactis gigantea (Giant Caribbean anemone).